A 141-amino-acid chain; its full sequence is Nucleoside diphosphate kinase (141 aa).

Positions 9, 57, 85, 91, 102, and 112 each coordinate ATP. H115 functions as the Pros-phosphohistidine intermediate in the catalytic mechanism.

It belongs to the NDK family. As to quaternary structure, homotetramer. Mg(2+) serves as cofactor.

The protein localises to the cytoplasm. The enzyme catalyses a 2'-deoxyribonucleoside 5'-diphosphate + ATP = a 2'-deoxyribonucleoside 5'-triphosphate + ADP. It catalyses the reaction a ribonucleoside 5'-diphosphate + ATP = a ribonucleoside 5'-triphosphate + ADP. Major role in the synthesis of nucleoside triphosphates other than ATP. The ATP gamma phosphate is transferred to the NDP beta phosphate via a ping-pong mechanism, using a phosphorylated active-site intermediate. This Chlamydia trachomatis serovar A (strain ATCC VR-571B / DSM 19440 / HAR-13) protein is Nucleoside diphosphate kinase.